We begin with the raw amino-acid sequence, 89 residues long: DNA/RNA-binding protein Alba 2 (89 aa).

An N6-acetyllysine modification is found at K12.

The protein belongs to the histone-like Alba family. Post-translationally, acetylated. Acetylation at Lys-12 decreases DNA-binding affinity.

It localises to the cytoplasm. Its subcellular location is the chromosome. In terms of biological role, binds double-stranded DNA tightly but without sequence specificity. Involved in DNA compaction. The protein is DNA/RNA-binding protein Alba 2 of Saccharolobus shibatae (strain ATCC 51178 / DSM 5389 / JCM 8931 / NBRC 15437 / B12) (Sulfolobus shibatae).